The following is a 162-amino-acid chain: Endoribonuclease YbeY (162 aa).

Residues H117, H121, and H127 each coordinate Zn(2+).

This sequence belongs to the endoribonuclease YbeY family. Requires Zn(2+) as cofactor.

The protein resides in the cytoplasm. In terms of biological role, single strand-specific metallo-endoribonuclease involved in late-stage 70S ribosome quality control and in maturation of the 3' terminus of the 16S rRNA. The chain is Endoribonuclease YbeY from Francisella tularensis subsp. mediasiatica (strain FSC147).